Consider the following 353-residue polypeptide: UDP-3-O-acylglucosamine N-acyltransferase (353 aa).

The Proton acceptor role is filled by His-246.

The protein belongs to the transferase hexapeptide repeat family. LpxD subfamily. In terms of assembly, homotrimer.

The enzyme catalyses a UDP-3-O-[(3R)-3-hydroxyacyl]-alpha-D-glucosamine + a (3R)-hydroxyacyl-[ACP] = a UDP-2-N,3-O-bis[(3R)-3-hydroxyacyl]-alpha-D-glucosamine + holo-[ACP] + H(+). It functions in the pathway bacterial outer membrane biogenesis; LPS lipid A biosynthesis. Functionally, catalyzes the N-acylation of UDP-3-O-acylglucosamine using 3-hydroxyacyl-ACP as the acyl donor. Is involved in the biosynthesis of lipid A, a phosphorylated glycolipid that anchors the lipopolysaccharide to the outer membrane of the cell. This is UDP-3-O-acylglucosamine N-acyltransferase from Chlorobaculum tepidum (strain ATCC 49652 / DSM 12025 / NBRC 103806 / TLS) (Chlorobium tepidum).